Reading from the N-terminus, the 202-residue chain is Urease accessory protein UreF (202 aa).

This sequence belongs to the UreF family. In terms of assembly, ureD, UreF and UreG form a complex that acts as a GTP-hydrolysis-dependent molecular chaperone, activating the urease apoprotein by helping to assemble the nickel containing metallocenter of UreC. The UreE protein probably delivers the nickel.

It is found in the cytoplasm. In terms of biological role, required for maturation of urease via the functional incorporation of the urease nickel metallocenter. The protein is Urease accessory protein UreF of Sporosarcina pasteurii (Bacillus pasteurii).